The chain runs to 238 residues: Serine protease SplE (238 aa).

The first 36 residues, 1 to 36, serve as a signal peptide directing secretion; that stretch reads MNKNIIIKSIAALTILTSVTGVGTTMVEGIQQTAKA. Catalysis depends on charge relay system residues His-75, Asp-113, and Ser-191.

This sequence belongs to the peptidase S1B family.

The protein resides in the secreted. The protein is Serine protease SplE (splE) of Staphylococcus aureus.